Here is a 445-residue protein sequence, read N- to C-terminus: Exodeoxyribonuclease 7 large subunit (445 aa).

Belongs to the XseA family. Heterooligomer composed of large and small subunits.

The protein localises to the cytoplasm. The enzyme catalyses Exonucleolytic cleavage in either 5'- to 3'- or 3'- to 5'-direction to yield nucleoside 5'-phosphates.. In terms of biological role, bidirectionally degrades single-stranded DNA into large acid-insoluble oligonucleotides, which are then degraded further into small acid-soluble oligonucleotides. This is Exodeoxyribonuclease 7 large subunit from Staphylococcus epidermidis (strain ATCC 35984 / DSM 28319 / BCRC 17069 / CCUG 31568 / BM 3577 / RP62A).